The sequence spans 149 residues: Snake venom vascular endothelial growth factor toxin 2 (149 aa).

The N-terminal stretch at 1–24 is a signal peptide; that stretch reads MAAYLLAVAILFCIQGWPSGTVQG. Position 25 is a pyrrolidone carboxylic acid (Q25). Intrachain disulfides connect C38–C80, C69–C115, and C73–C117. Residues 118 to 149 are disordered; that stretch reads RPRSGRVNSGKRKRNPEEGGAESQVPLGLTSF.

This sequence belongs to the PDGF/VEGF growth factor family. Snake venom VEGF subfamily. In terms of assembly, homodimer; disulfide-linked. Interacts with VEGF receptor-1 (FLT1) with a high affinity, whereas it binds to VEGF receptor-2 (KDR) with a low affinity. Does not bind VEGF receptor-3 (FLT4). Expressed by the venom gland.

Its subcellular location is the secreted. Snake venom VEGFs that may contribute to venom dispersion and prey subjugation by inducing vascular permeability and hypotension. This protein induces an increase in capillary permeability after intradermal injection, as well as a drastic hypotensive effect after intravenous injection. The hypotension is mediated by nitric oxide (NO), which is produced by VEGF-activated endothelium NO synthase. Also induces angiogenesis in vitro. Like other crotalid VEGFs, this protein interacts with VEGF receptor-1 (FLT1) with a high affinity, whereas it binds to VEGF receptor-2 (KDR) with a low affinity. This chain is Snake venom vascular endothelial growth factor toxin 2, found in Sistrurus catenatus edwardsii (Desert massasauga).